We begin with the raw amino-acid sequence, 347 residues long: Probable dual-specificity RNA methyltransferase RlmN (347 aa).

Glu94 acts as the Proton acceptor in catalysis. One can recognise a Radical SAM core domain in the interval 100–334 (TETRTTACVS…AKVRHSRGKD (235 aa)). A disulfide bridge links Cys107 with Cys339. Residues Cys114, Cys118, and Cys121 each coordinate [4Fe-4S] cluster. Residues 165-166 (GE), Ser197, 220-222 (SLH), and Asn296 each bind S-adenosyl-L-methionine. Residue Cys339 is the S-methylcysteine intermediate of the active site.

Belongs to the radical SAM superfamily. RlmN family. Requires [4Fe-4S] cluster as cofactor.

Its subcellular location is the cytoplasm. The enzyme catalyses adenosine(2503) in 23S rRNA + 2 reduced [2Fe-2S]-[ferredoxin] + 2 S-adenosyl-L-methionine = 2-methyladenosine(2503) in 23S rRNA + 5'-deoxyadenosine + L-methionine + 2 oxidized [2Fe-2S]-[ferredoxin] + S-adenosyl-L-homocysteine. It catalyses the reaction adenosine(37) in tRNA + 2 reduced [2Fe-2S]-[ferredoxin] + 2 S-adenosyl-L-methionine = 2-methyladenosine(37) in tRNA + 5'-deoxyadenosine + L-methionine + 2 oxidized [2Fe-2S]-[ferredoxin] + S-adenosyl-L-homocysteine. Its function is as follows. Specifically methylates position 2 of adenine 2503 in 23S rRNA and position 2 of adenine 37 in tRNAs. In Flavobacterium psychrophilum (strain ATCC 49511 / DSM 21280 / CIP 103535 / JIP02/86), this protein is Probable dual-specificity RNA methyltransferase RlmN.